Consider the following 506-residue polypeptide: Bifunctional purine biosynthesis protein PurH (506 aa).

Residues 1-146 (MARLALLSVS…KNFAHLTVLC (146 aa)) enclose the MGS-like domain.

The protein belongs to the PurH family.

It catalyses the reaction (6R)-10-formyltetrahydrofolate + 5-amino-1-(5-phospho-beta-D-ribosyl)imidazole-4-carboxamide = 5-formamido-1-(5-phospho-D-ribosyl)imidazole-4-carboxamide + (6S)-5,6,7,8-tetrahydrofolate. The catalysed reaction is IMP + H2O = 5-formamido-1-(5-phospho-D-ribosyl)imidazole-4-carboxamide. The protein operates within purine metabolism; IMP biosynthesis via de novo pathway; 5-formamido-1-(5-phospho-D-ribosyl)imidazole-4-carboxamide from 5-amino-1-(5-phospho-D-ribosyl)imidazole-4-carboxamide (10-formyl THF route): step 1/1. Its pathway is purine metabolism; IMP biosynthesis via de novo pathway; IMP from 5-formamido-1-(5-phospho-D-ribosyl)imidazole-4-carboxamide: step 1/1. This Nostoc sp. (strain PCC 7120 / SAG 25.82 / UTEX 2576) protein is Bifunctional purine biosynthesis protein PurH.